A 186-amino-acid polypeptide reads, in one-letter code: MAVARARVLGVQWLQRASRNVMPLGARTASHMTKDMFPGPYPRTPEERAAAAKKYNMRVEDYEPYPDDGMGYGDYPKLPDRSQHERDPWYSWDQPGLRLNWGEPMHWHLDMYNRNRVDTSPTPISWHVMCMQLFGFLAFMIFMCWVGDVYPVYQPVGPKQYPYNNLYLERGGDPSKEPERVVHYEI.

Residues 1-28 constitute a mitochondrion transit peptide; the sequence is MAVARARVLGVQWLQRASRNVMPLGART. Residues 133–153 traverse the membrane as a helical segment; it reads LFGFLAFMIFMCWVGDVYPVY.

It belongs to the complex I NDUFB8 subunit family. In terms of assembly, complex I is composed of 45 different subunits.

It localises to the mitochondrion inner membrane. In terms of biological role, accessory subunit of the mitochondrial membrane respiratory chain NADH dehydrogenase (Complex I), that is believed not to be involved in catalysis. Complex I functions in the transfer of electrons from NADH to the respiratory chain. The immediate electron acceptor for the enzyme is believed to be ubiquinone. This chain is NADH dehydrogenase [ubiquinone] 1 beta subcomplex subunit 8, mitochondrial (NDUFB8), found in Gorilla gorilla gorilla (Western lowland gorilla).